We begin with the raw amino-acid sequence, 652 residues long: Cleavage and polyadenylation specificity factor subunit 6 (652 aa).

A disordered region spans residues 20-85 (QAQDEFGGDG…GVYHQSSGSL (66 aa)). The 81-residue stretch at 93 to 173 (YQLYVGNLTW…QAPVVTYPSK (81 aa)) folds into the RRM domain. Disordered regions lie at residues 184–440 (KTRP…QQMG) and 518–652 (SYNR…RSRH). Pro residues predominate over residues 187-203 (PVPPPQQNGPPRGPAPP). Positions 205–223 (MGGGPMPTGHPGGPQGGGP) are enriched in gly residues. Composition is skewed to pro residues over residues 256-266 (SGPPRMQPPMH), 295-307 (GPRP…PPQR), and 338-352 (PQGP…PGPG). Over residues 391–406 (PGMNMPPQQGMNMTPQ) the composition is skewed to low complexity. Pro residues predominate over residues 420–435 (GPWPPPQGKPPGPFPD). Residues 518–528 (SYNRRERSRSR) are compositionally biased toward basic and acidic residues. Over residues 529 to 538 (ERSHRSRQRR) the composition is skewed to basic residues. The span at 539–590 (ERSTSRYRERSRERERDRDRERERDGGSYRERSRSRERERQAPDHYRDDSRS) shows a compositional bias: basic and acidic residues. Serine 596 bears the Phosphoserine mark. A compositionally biased stretch (low complexity) spans 598-610 (EPVVAEAAEAPSS). Basic and acidic residues predominate over residues 612–652 (RYYEDRERYRSSDRERRDRDRDRDRERERDRDRREEHRSRH).

This sequence belongs to the RRM CPSF6/7 family.

It is found in the nucleus. May play a role in pre-mRNA 3'-processing. This is Cleavage and polyadenylation specificity factor subunit 6 from Drosophila melanogaster (Fruit fly).